The following is a 101-amino-acid chain: MFDQTTHTEVHPLTVGKIETASGAIKPQLLRDAVKRAVTNFFAQMDGQEAEEVYEMVLSEVEAPLLDIIMQHTRGNQTRAANMLGINRGTLRKKLKKYGMN.

Positions Gln77 to Lys96 form a DNA-binding region, H-T-H motif.

This sequence belongs to the transcriptional regulatory Fis family. In terms of assembly, homodimer.

Functionally, activates ribosomal RNA transcription. Plays a direct role in upstream activation of rRNA promoters. In Shewanella pealeana (strain ATCC 700345 / ANG-SQ1), this protein is DNA-binding protein Fis.